The primary structure comprises 595 residues: UvrABC system protein C (595 aa).

The GIY-YIG domain occupies 14–91 (SNPGCYLHKD…IQENMPKFNI (78 aa)). The UVR domain occupies 196–231 (DKIVNQLKAKMKDMSDQMEFERAAEYRDLIEAVSTL).

This sequence belongs to the UvrC family. In terms of assembly, interacts with UvrB in an incision complex.

The protein resides in the cytoplasm. Functionally, the UvrABC repair system catalyzes the recognition and processing of DNA lesions. UvrC both incises the 5' and 3' sides of the lesion. The N-terminal half is responsible for the 3' incision and the C-terminal half is responsible for the 5' incision. This Streptococcus thermophilus (strain CNRZ 1066) protein is UvrABC system protein C.